The sequence spans 151 residues: Regulatory protein RecX (151 aa).

The protein belongs to the RecX family.

The protein localises to the cytoplasm. Functionally, modulates RecA activity. The protein is Regulatory protein RecX of Chlorobium phaeobacteroides (strain BS1).